Consider the following 164-residue polypeptide: MPSSALLCCLIFLARVAAGQHQGTQAKDSCIHFPDSLPHMLRELRAAFSNVKTFFQMNDQLDNSLLSQSLLEDFKGYLGCQALSEMIQFYLEEVMPKAEDHGPNIKEHVNSLGEKLKTLRLRLRRCHRFLPCENKSKAVEQVKSVFNKLQEKGVYKAMREFDIF.

Residues 1–18 (MPSSALLCCLIFLARVAA) form the signal peptide. Disulfide bonds link Cys-30–Cys-126 and Cys-80–Cys-132. N-linked (GlcNAc...) asparagine glycosylation is present at Asn-134.

Belongs to the IL-10 family. As to quaternary structure, homodimer. Interacts with IL10RA and IL10RB.

It is found in the secreted. In terms of biological role, major immune regulatory cytokine that acts on many cells of the immune system where it has profound anti-inflammatory functions, limiting excessive tissue disruption caused by inflammation. Mechanistically, IL10 binds to its heterotetrameric receptor comprising IL10RA and IL10RB leading to JAK1 and STAT2-mediated phosphorylation of STAT3. In turn, STAT3 translocates to the nucleus where it drives expression of anti-inflammatory mediators. Targets antigen-presenting cells (APCs) such as macrophages and monocytes and inhibits their release of pro-inflammatory cytokines including granulocyte-macrophage colony-stimulating factor /GM-CSF, granulocyte colony-stimulating factor/G-CSF, IL-1 alpha, IL-1 beta, IL-6, IL-8 and TNF-alpha. Also interferes with antigen presentation by reducing the expression of MHC-class II and co-stimulatory molecules, thereby inhibiting their ability to induce T cell activation. In addition, controls the inflammatory response of macrophages by reprogramming essential metabolic pathways including mTOR signaling. This Orcinus orca (Killer whale) protein is Interleukin-10 (IL10).